Here is a 285-residue protein sequence, read N- to C-terminus: NAD kinase (285 aa).

Asp68 acts as the Proton acceptor in catalysis. Residues 68-69 (DG), 142-143 (ND), Arg153, Lys170, Asp172, and Gln242 each bind NAD(+).

This sequence belongs to the NAD kinase family. Requires a divalent metal cation as cofactor.

It is found in the cytoplasm. The enzyme catalyses NAD(+) + ATP = ADP + NADP(+) + H(+). In terms of biological role, involved in the regulation of the intracellular balance of NAD and NADP, and is a key enzyme in the biosynthesis of NADP. Catalyzes specifically the phosphorylation on 2'-hydroxyl of the adenosine moiety of NAD to yield NADP. The polypeptide is NAD kinase (Koribacter versatilis (strain Ellin345)).